Reading from the N-terminus, the 281-residue chain is NADH-cytochrome b5 reductase 1 (281 aa).

The helical transmembrane segment at 2-22 (VPGKFIFTATFVLLCTIIAVV) threads the bilayer. The FAD-binding FR-type domain maps to 37–141 (EKLQEFPLVA…RGPKGFYHYQ (105 aa)). FAD is bound by residues 121–136 (AQLNIGDKIKVRGPKG) and 147–179 (EIGMIAGGTGIAPMYQIMKSIFANDSDKTKVSL).

The protein belongs to the flavoprotein pyridine nucleotide cytochrome reductase family. Monomer. Component of the 2-(3-amino-3-carboxypropyl)histidine synthase complex composed of DPH1, DPH2, DPH3 and a NADH-dependent reductase, predominantly CBR1. The cofactor is FAD.

It is found in the mitochondrion outer membrane. The catalysed reaction is 2 Fe(III)-[cytochrome b5] + NADH = 2 Fe(II)-[cytochrome b5] + NAD(+) + H(+). It carries out the reaction 2 Fe(3+)-[Dph3] + NADH = 2 Fe(2+)-[Dph3] + NAD(+) + H(+). It participates in protein modification; peptidyl-diphthamide biosynthesis. NADH-dependent reductase for DPH3 and cytochrome b5. Required for the first step of diphthamide biosynthesis, a post-translational modification of histidine which occurs in elongation factor 2. DPH1 and DPH2 transfer a 3-amino-3-carboxypropyl (ACP) group from S-adenosyl-L-methionine (SAM) to a histidine residue, the reaction is assisted by a reduction system comprising DPH3 and a NADH-dependent reductase, predominantly CBR1. By reducing DPH3, also involved in the formation of the tRNA wobble base modification mcm5s 2U (5-methoxycarbonylmethyl-2-thiouridine), mediated by the elongator complex. The cytochrome b5/NADH cytochrome b5 reductase electron transfer system supports the catalytic activity of several sterol biosynthetic enzymes. This Kluyveromyces lactis (strain ATCC 8585 / CBS 2359 / DSM 70799 / NBRC 1267 / NRRL Y-1140 / WM37) (Yeast) protein is NADH-cytochrome b5 reductase 1 (CBR1).